Reading from the N-terminus, the 252-residue chain is E3 ubiquitin-protein ligase MARCHF3 (252 aa).

An RING-CH-type zinc finger spans residues 62-122; that stretch reads SSFNDHPMCR…ELCHFRFSVE (61 aa). Residues C70, C73, C86, C88, H96, C99, C112, and C115 each coordinate Zn(2+). 2 consecutive transmembrane segments (helical) span residues 144–164 and 181–201; these read LFGD…SGWL and AVGL…WTLV.

The protein localises to the cytoplasmic vesicle membrane. It localises to the early endosome membrane. It carries out the reaction S-ubiquitinyl-[E2 ubiquitin-conjugating enzyme]-L-cysteine + [acceptor protein]-L-lysine = [E2 ubiquitin-conjugating enzyme]-L-cysteine + N(6)-ubiquitinyl-[acceptor protein]-L-lysine.. Its pathway is protein modification; protein ubiquitination. Its function is as follows. E3 ubiquitin-protein ligase which may be involved in endosomal trafficking. E3 ubiquitin ligases accept ubiquitin from an E2 ubiquitin-conjugating enzyme in the form of a thioester and then directly transfer the ubiquitin to targeted substrates. This is E3 ubiquitin-protein ligase MARCHF3 (marchf3) from Xenopus laevis (African clawed frog).